The sequence spans 149 residues: Transcriptional regulator MraZ (149 aa).

SpoVT-AbrB domains follow at residues 7–54 (KYVN…GISH) and 83–126 (AVQL…QPQN).

This sequence belongs to the MraZ family. Forms oligomers.

It is found in the cytoplasm. The protein resides in the nucleoid. The protein is Transcriptional regulator MraZ of Rickettsia akari (strain Hartford).